Reading from the N-terminus, the 449-residue chain is Phosphoglucosamine mutase (449 aa).

The active-site Phosphoserine intermediate is S100. 4 residues coordinate Mg(2+): S100, D241, D243, and D245. Residue S100 is modified to Phosphoserine.

Belongs to the phosphohexose mutase family. The cofactor is Mg(2+). Activated by phosphorylation.

It carries out the reaction alpha-D-glucosamine 1-phosphate = D-glucosamine 6-phosphate. Functionally, catalyzes the conversion of glucosamine-6-phosphate to glucosamine-1-phosphate. The polypeptide is Phosphoglucosamine mutase (Clostridium botulinum (strain Langeland / NCTC 10281 / Type F)).